The sequence spans 323 residues: Aspartate carbamoyltransferase catalytic subunit (323 aa).

Carbamoyl phosphate-binding residues include R61 and T62. K89 contacts L-aspartate. The carbamoyl phosphate site is built by R111, H144, and Q147. L-aspartate is bound by residues R184 and R238. G279 and P280 together coordinate carbamoyl phosphate.

It belongs to the aspartate/ornithine carbamoyltransferase superfamily. ATCase family. Heterododecamer (2C3:3R2) of six catalytic PyrB chains organized as two trimers (C3), and six regulatory PyrI chains organized as three dimers (R2).

The catalysed reaction is carbamoyl phosphate + L-aspartate = N-carbamoyl-L-aspartate + phosphate + H(+). Its pathway is pyrimidine metabolism; UMP biosynthesis via de novo pathway; (S)-dihydroorotate from bicarbonate: step 2/3. Catalyzes the condensation of carbamoyl phosphate and aspartate to form carbamoyl aspartate and inorganic phosphate, the committed step in the de novo pyrimidine nucleotide biosynthesis pathway. In Acaryochloris marina (strain MBIC 11017), this protein is Aspartate carbamoyltransferase catalytic subunit.